A 356-amino-acid polypeptide reads, in one-letter code: S-adenosylmethionine:tRNA ribosyltransferase-isomerase (356 aa).

It belongs to the QueA family. Monomer.

The protein resides in the cytoplasm. It carries out the reaction 7-aminomethyl-7-carbaguanosine(34) in tRNA + S-adenosyl-L-methionine = epoxyqueuosine(34) in tRNA + adenine + L-methionine + 2 H(+). Its pathway is tRNA modification; tRNA-queuosine biosynthesis. Its function is as follows. Transfers and isomerizes the ribose moiety from AdoMet to the 7-aminomethyl group of 7-deazaguanine (preQ1-tRNA) to give epoxyqueuosine (oQ-tRNA). The protein is S-adenosylmethionine:tRNA ribosyltransferase-isomerase of Escherichia coli O6:H1 (strain CFT073 / ATCC 700928 / UPEC).